The following is a 1193-amino-acid chain: Protogenin (1193 aa).

The first 23 residues, 1–23, serve as a signal peptide directing secretion; sequence MAPPVRPGMLPLLLLLLLPPLGS. 4 consecutive Ig-like domains span residues 24–124, 126–217, 230–317, and 322–406; these read VPGV…AHLT, STIS…ASLT, PTII…ATLT, and PSFV…ARLT. At 24-944 the chain is on the extracellular side; it reads VPGVWSFSEL…YYHLDQKSMT (921 aa). 2 disulfides stabilise this stretch: C54–C107 and C150–C200. Residue N84 is glycosylated (N-linked (GlcNAc...) asparagine). N238 is a glycosylation site (N-linked (GlcNAc...) asparagine). Intrachain disulfides connect C251-C299 and C343-C390. 5 consecutive Fibronectin type-III domains span residues 416-510, 512-608, 613-712, 719-812, and 817-912; these read APYN…TLED, PLRP…TPKA, APKS…VRDR, PPHH…TLPE, and PPVG…VLPK. N-linked (GlcNAc...) asparagine glycosylation is present at N625. The helical transmembrane segment at 945–965 threads the bilayer; sequence GIAVGVGIALTCILICVLILI. Over 966 to 1193 the chain is Cytoplasmic; the sequence is YRSKARKSSA…LRHAAESVPV (228 aa). Disordered stretches follow at residues 974–1018 and 1078–1193; these read SASK…PMMP and VLIS…SVPV. Composition is skewed to polar residues over residues 978–990 and 1086–1095; these read TTQSGTQPLSRAS and PSSPGQTTSF. Residues 1105–1133 are compositionally biased toward basic and acidic residues; sequence DTEHSANSEGSHETGDSGRFSHESNDEIH. Residues 1136–1150 show a composition bias toward polar residues; the sequence is SVISSTPPTSNSLTC.

The protein belongs to the immunoglobulin superfamily. DCC family.

The protein resides in the membrane. In terms of biological role, may play a role in anteroposterior axis elongation. This is Protogenin from Rattus norvegicus (Rat).